Consider the following 436-residue polypeptide: MVGFGANRRAGRLPSLVLVVLLVVIVVLAFNYWSISSRHVLLQEEVAELQGQVQRTEVARGRLEKRNSDLLLLVDTHKKQIDQKEADYGRLSSRLQAREGLGKRCEDDKVKLQNNISYQMADIHHLKEQLAELRQEFLRQEDQLQDYRKNNTYLVKRLEYESFQCGQQMKELRAQHEENIKKLADQFLEEQKQETQKIQSNDGKELDINNQVVPKNIPKVAENVADKNEEPSSNHIPHGKEQIKRGGDAGMPGIEENDLAKVDDLPPALRKPPISVSQHESHQAISHLPTGQPLSPNMPPDSHINHNGNPGTSKQNPSSPLQRLIPGSNLDSEPRIQTDILKQATKDRVSDFHKLKQSRFFDENESPVDPQHGSKLADYNGDDGNVGEYEADKQAELAYNEEEDGDGGEEDVQDDEERELQMDPADYGKQHFNDVL.

At Met1 the chain carries N-acetylmethionine. Residues 1–14 (MVGFGANRRAGRLP) are Cytoplasmic-facing. A helical; Signal-anchor for type II membrane protein transmembrane segment spans residues 15-35 (SLVLVVLLVVIVVLAFNYWSI). Residues 35-198 (ISSRHVLLQE…EEQKQETQKI (164 aa)) are a coiled coil. The Lumenal segment spans residues 36 to 436 (SSRHVLLQEE…YGKQHFNDVL (401 aa)). Over residues 225–247 (ADKNEEPSSNHIPHGKEQIKRGG) the composition is skewed to basic and acidic residues. Residues 225–436 (ADKNEEPSSN…YGKQHFNDVL (212 aa)) form a disordered region. A phosphoserine mark is found at Ser233 and Ser275. Positions 305–321 (NHNGNPGTSKQNPSSPL) are enriched in polar residues. Residues Ser328 and Ser332 each carry the phosphoserine modification. Positions 344 to 362 (ATKDRVSDFHKLKQSRFFD) are enriched in basic and acidic residues. A Phosphoserine modification is found at Ser366. The segment covering 399 to 418 (YNEEEDGDGGEEDVQDDEER) has biased composition (acidic residues). A compositionally biased stretch (basic and acidic residues) spans 426-436 (DYGKQHFNDVL).

Belongs to the GOLM family.

The protein resides in the membrane. This Homo sapiens (Human) protein is Protein GOLM2.